The sequence spans 157 residues: Lipoprotein signal peptidase (157 aa).

3 helical membrane-spanning segments follow: residues 10–30, 58–78, and 84–104; these read LVFM…KYAI, FLEG…FIFL, and LFKN…SNVL. Catalysis depends on residues Asp-114 and Asp-131. A helical transmembrane segment spans residues 122–142; it reads FDFAIFNFADVMIDVGVGVLL.

This sequence belongs to the peptidase A8 family.

The protein resides in the cell inner membrane. The catalysed reaction is Release of signal peptides from bacterial membrane prolipoproteins. Hydrolyzes -Xaa-Yaa-Zaa-|-(S,diacylglyceryl)Cys-, in which Xaa is hydrophobic (preferably Leu), and Yaa (Ala or Ser) and Zaa (Gly or Ala) have small, neutral side chains.. It participates in protein modification; lipoprotein biosynthesis (signal peptide cleavage). Its function is as follows. This protein specifically catalyzes the removal of signal peptides from prolipoproteins. The polypeptide is Lipoprotein signal peptidase (Helicobacter pylori (strain ATCC 700392 / 26695) (Campylobacter pylori)).